The chain runs to 391 residues: Probable methanogen homoaconitase large subunit (391 aa).

Cys275, Cys333, and Cys336 together coordinate [4Fe-4S] cluster.

The protein belongs to the aconitase/IPM isomerase family. LeuC type 2 subfamily. As to quaternary structure, heterotetramer of 2 HacA and 2 HacB proteins.

The enzyme catalyses (2R)-homocitrate = (2R,3S)-homoisocitrate. It carries out the reaction (2R)-homocitrate = cis-homoaconitate + H2O. It catalyses the reaction (2R,3S)-homoisocitrate = cis-homoaconitate + H2O. The catalysed reaction is cis-(homo)2aconitate + H2O = (2R,3S)-iso(homo)2citrate. The enzyme catalyses cis-(homo)3aconitate + H2O = (2R,3S)-iso(homo)3citrate. It functions in the pathway organic acid metabolism; 2-oxosuberate biosynthesis. Component of a hydro-lyase with broad substrate specificity for cis-unsaturated tricarboxylic acids. Catalyzes both the reversible dehydration of (R)-homocitrate ((R)-2-hydroxybutane-1,2,4-tricarboxylate) to produce cis-homoaconitate ((Z)-but-1-ene-1,2,4-tricarboxylate), and its hydration to homoisocitrate ((1R,2S)-1-hydroxybutane-1,2,4-tricarboxylate). Is also able to hydrate the analogous longer chain substrates cis-homo(2)-aconitate, cis-homo(3)-aconitate. These reactions are part of the biosynthesis pathway of coenzyme B. The sequence is that of Probable methanogen homoaconitase large subunit (hacA) from Methanosarcina mazei (strain ATCC BAA-159 / DSM 3647 / Goe1 / Go1 / JCM 11833 / OCM 88) (Methanosarcina frisia).